The chain runs to 396 residues: Elongation factor Tu 2 (396 aa).

The tr-type G domain occupies 10-206; that stretch reads KPHVNVGTIG…ALDSYIPLPE (197 aa). Residues 19–26 are G1; that stretch reads GHVDHGKT. A GTP-binding site is contributed by 19–26; sequence GHVDHGKT. Mg(2+) is bound at residue T26. The interval 60 to 64 is G2; the sequence is GITIN. The tract at residues 81–84 is G3; that stretch reads DCPG. GTP-binding positions include 81 to 85 and 136 to 139; these read DCPGH and NKCD. Positions 136-139 are G4; sequence NKCD. The interval 174-176 is G5; that stretch reads SAK.

Belongs to the TRAFAC class translation factor GTPase superfamily. Classic translation factor GTPase family. EF-Tu/EF-1A subfamily. In terms of assembly, monomer.

The protein localises to the cytoplasm. The enzyme catalyses GTP + H2O = GDP + phosphate + H(+). Functionally, GTP hydrolase that promotes the GTP-dependent binding of aminoacyl-tRNA to the A-site of ribosomes during protein biosynthesis. In Albidiferax ferrireducens (strain ATCC BAA-621 / DSM 15236 / T118) (Rhodoferax ferrireducens), this protein is Elongation factor Tu 2.